The primary structure comprises 214 residues: Pyridoxine/pyridoxamine 5'-phosphate oxidase (214 aa).

Residues 9–12 and K67 contribute to the substrate site; that span reads RLDY. Residues 62–67, 77–78, K84, and Q106 each bind FMN; these read RMVLLK and FT. 3 residues coordinate substrate: Y124, R128, and S132. FMN is bound by residues 141–142 and W186; that span reads QS. 192–194 lines the substrate pocket; it reads RLH. R196 contributes to the FMN binding site.

The protein belongs to the pyridoxamine 5'-phosphate oxidase family. In terms of assembly, homodimer. Requires FMN as cofactor.

The catalysed reaction is pyridoxamine 5'-phosphate + O2 + H2O = pyridoxal 5'-phosphate + H2O2 + NH4(+). It catalyses the reaction pyridoxine 5'-phosphate + O2 = pyridoxal 5'-phosphate + H2O2. The protein operates within cofactor metabolism; pyridoxal 5'-phosphate salvage; pyridoxal 5'-phosphate from pyridoxamine 5'-phosphate: step 1/1. It participates in cofactor metabolism; pyridoxal 5'-phosphate salvage; pyridoxal 5'-phosphate from pyridoxine 5'-phosphate: step 1/1. Its function is as follows. Catalyzes the oxidation of either pyridoxine 5'-phosphate (PNP) or pyridoxamine 5'-phosphate (PMP) into pyridoxal 5'-phosphate (PLP). This is Pyridoxine/pyridoxamine 5'-phosphate oxidase from Microcystis aeruginosa (strain NIES-843 / IAM M-2473).